A 33-amino-acid polypeptide reads, in one-letter code: Pardaxin P-4 (33 aa).

The protein belongs to the pardaxin family. As to quaternary structure, monomer. In aqueous solution exists as a tetramer.

The protein localises to the secreted. Its subcellular location is the target cell membrane. In terms of biological role, exhibits unusual shark repellent and surfactant properties. Forms voltage-dependent, ion-permeable channels in membranes. At high concentration causes cell membrane lysis. The protein is Pardaxin P-4 of Pardachirus marmoratus (Finless sole).